A 182-amino-acid chain; its full sequence is NADH-ubiquinone oxidoreductase 20 kDa subunit (182 aa).

[4Fe-4S] cluster contacts are provided by C57, C58, C122, and C152.

It belongs to the complex I 20 kDa subunit family. [4Fe-4S] cluster serves as cofactor.

Its subcellular location is the mitochondrion. The enzyme catalyses a ubiquinone + NADH + 5 H(+)(in) = a ubiquinol + NAD(+) + 4 H(+)(out). This Reclinomonas americana protein is NADH-ubiquinone oxidoreductase 20 kDa subunit (NAD10).